Here is a 110-residue protein sequence, read N- to C-terminus: ATP-dependent Clp protease adapter protein ClpS 2 (110 aa).

A disordered region spans residues 1 to 24; the sequence is MSNDENRSGSPTGPNTSVITKVKP. Residues 8–19 are compositionally biased toward polar residues; it reads SGSPTGPNTSVI.

Belongs to the ClpS family. In terms of assembly, binds to the N-terminal domain of the chaperone ClpA.

Involved in the modulation of the specificity of the ClpAP-mediated ATP-dependent protein degradation. This Bradyrhizobium diazoefficiens (strain JCM 10833 / BCRC 13528 / IAM 13628 / NBRC 14792 / USDA 110) protein is ATP-dependent Clp protease adapter protein ClpS 2.